Here is a 995-residue protein sequence, read N- to C-terminus: Probable copper-transporting ATPase HMA5 (995 aa).

The Cytoplasmic segment spans residues 1-299; that stretch reads MATKLLSLTC…QGEIKQYYKS (299 aa). HMA domains lie at 51–117 and 129–195; these read SRAV…FEAS and QVCR…FEAV. Positions 62, 65, 140, and 143 each coordinate Cu(+). Residues 204-270 form the HMA 3; degenerate domain; that stretch reads SKIDLKIDGE…VIESTVFGHS (67 aa). A helical membrane pass occupies residues 300–321; sequence FLWSLVFTVPVFLTAMVFMYIP. Residues 322-340 lie on the Extracellular side of the membrane; that stretch reads GIKDLLMFKVINMLTVGEI. A helical membrane pass occupies residues 341–360; sequence IRCVLATPVQFVIGWRFYTG. The Cytoplasmic segment spans residues 361 to 367; it reads SYKALRR. A helical transmembrane segment spans residues 368 to 388; that stretch reads GSANMDVLIALGTNAAYFYSL. The Extracellular portion of the chain corresponds to 389-406; that stretch reads YTVLRAATSPDFKGVDFF. A helical transmembrane segment spans residues 407–427; it reads ETSAMLISFIILGKYLEVMAK. At 428–561 the chain is on the cytoplasmic side; it reads GKTSQAIAKL…KAPVQKLADR (134 aa). Residues 562–584 traverse the membrane as a helical segment; sequence ISKFFVPLVIFLSFSTWLAWFLA. Residues 585–605 lie on the Extracellular side of the membrane; sequence GKLHWYPESWIPSSMDSFELA. Residues 606–623 traverse the membrane as a helical segment; it reads LQFGISVMVIACPCALGL. The Cytoplasmic portion of the chain corresponds to 624-920; that stretch reads ATPTAVMVGT…DLSRKTFSRI (297 aa). Catalysis depends on aspartate 661, which acts as the 4-aspartylphosphate intermediate. The Mg(2+) site is built by aspartate 866 and aspartate 870. Residues 921–940 form a helical membrane-spanning segment; that stretch reads RLNYVWALGYNLMGIPIAAG. Topologically, residues 941–952 are extracellular; it reads VLFPGTRFRLPP. The chain crosses the membrane as a helical span at residues 953–971; sequence WIAGAAMAASSVSVVCCSL. At 972 to 995 the chain is on the cytoplasmic side; it reads LLKNYKRPKKLDHLEIREIQVERV.

Belongs to the cation transport ATPase (P-type) (TC 3.A.3) family. Type IB subfamily. As to quaternary structure, interacts with ATX1. In terms of tissue distribution, expressed in roots and flowers.

The protein localises to the membrane. The catalysed reaction is Cu(+)(in) + ATP + H2O = Cu(+)(out) + ADP + phosphate + H(+). In terms of biological role, involved in copper import into the cell. May play a role in copper detoxification in roots. This is Probable copper-transporting ATPase HMA5 (HMA5) from Arabidopsis thaliana (Mouse-ear cress).